The following is a 316-amino-acid chain: Spermidine synthase (316 aa).

A PABS domain is found at 25–262 (PGWFSEISPM…GVIGFMLCST (238 aa)). Residue Gln56 coordinates S-adenosyl 3-(methylsulfanyl)propylamine. Tyr86 contacts putrescine. S-adenosyl 3-(methylsulfanyl)propylamine is bound by residues Gln87, Asp111, Glu131, 162 to 163 (DG), and Asp181. The active-site Proton acceptor is the Asp181. Putrescine is bound by residues 181–184 (DSSD) and Tyr250.

Belongs to the spermidine/spermine synthase family.

The enzyme catalyses S-adenosyl 3-(methylsulfanyl)propylamine + putrescine = S-methyl-5'-thioadenosine + spermidine + H(+). It functions in the pathway amine and polyamine biosynthesis; spermidine biosynthesis; spermidine from putrescine: step 1/1. The sequence is that of Spermidine synthase from Coffea arabica (Arabian coffee).